We begin with the raw amino-acid sequence, 396 residues long: 1-deoxy-D-xylulose 5-phosphate reductoisomerase (396 aa).

Residues T15, G16, S17, I18, G41, and N130 each contribute to the NADPH site. K131 provides a ligand contact to 1-deoxy-D-xylulose 5-phosphate. E132 is a binding site for NADPH. D155 contributes to the Mn(2+) binding site. 4 residues coordinate 1-deoxy-D-xylulose 5-phosphate: S156, E157, S181, and H204. E157 lines the Mn(2+) pocket. Position 210 (G210) interacts with NADPH. 1-deoxy-D-xylulose 5-phosphate is bound by residues S217, N222, K223, and E226. E226 is a binding site for Mn(2+).

Belongs to the DXR family. It depends on Mg(2+) as a cofactor. The cofactor is Mn(2+).

The catalysed reaction is 2-C-methyl-D-erythritol 4-phosphate + NADP(+) = 1-deoxy-D-xylulose 5-phosphate + NADPH + H(+). It functions in the pathway isoprenoid biosynthesis; isopentenyl diphosphate biosynthesis via DXP pathway; isopentenyl diphosphate from 1-deoxy-D-xylulose 5-phosphate: step 1/6. Catalyzes the NADPH-dependent rearrangement and reduction of 1-deoxy-D-xylulose-5-phosphate (DXP) to 2-C-methyl-D-erythritol 4-phosphate (MEP). The protein is 1-deoxy-D-xylulose 5-phosphate reductoisomerase of Bifidobacterium longum subsp. infantis (strain ATCC 15697 / DSM 20088 / JCM 1222 / NCTC 11817 / S12).